We begin with the raw amino-acid sequence, 298 residues long: 4-diphosphocytidyl-2-C-methyl-D-erythritol kinase (298 aa).

Lysine 11 is a catalytic residue. An ATP-binding site is contributed by 94–104; sequence PMGGGLGGGSS. The active site involves aspartate 136.

It belongs to the GHMP kinase family. IspE subfamily.

It catalyses the reaction 4-CDP-2-C-methyl-D-erythritol + ATP = 4-CDP-2-C-methyl-D-erythritol 2-phosphate + ADP + H(+). Its pathway is isoprenoid biosynthesis; isopentenyl diphosphate biosynthesis via DXP pathway; isopentenyl diphosphate from 1-deoxy-D-xylulose 5-phosphate: step 3/6. Catalyzes the phosphorylation of the position 2 hydroxy group of 4-diphosphocytidyl-2C-methyl-D-erythritol. The chain is 4-diphosphocytidyl-2-C-methyl-D-erythritol kinase from Chromohalobacter salexigens (strain ATCC BAA-138 / DSM 3043 / CIP 106854 / NCIMB 13768 / 1H11).